Consider the following 40-residue polypeptide: 67 kDa serum albumin (40 aa).

Positions 1 to 40 (DAEHKSEIVHRFNDLKEEKFKGAALITFAQFLHKKPEEEA) constitute an Albumin domain. A Cu cation-binding site is contributed by His4.

Belongs to the ALB/AFP/VDB family. As to expression, plasma.

The protein localises to the secreted. Its function is as follows. Serum albumin, the main protein of plasma, has a good binding capacity for water, Ca(2+), Na(+), K(+), fatty acids, hormones, bilirubin and drugs. Its main function is the regulation of the colloidal osmotic pressure of blood. The sequence is that of 67 kDa serum albumin from Trachemys scripta (Red-eared slider turtle).